Here is a 414-residue protein sequence, read N- to C-terminus: Tetraspanning orphan receptor (414 aa).

Topologically, residues 1–28 (MPRASALLTSDPRHQFTCCLCLHVRTGT) are cytoplasmic. Residues 29–49 (IIFGITQIIIQLIFISFLFLM) traverse the membrane as a helical segment. Over 50–166 (TFNPRLFPED…EIKIRQFSPY (117 aa)) the chain is Extracellular. A helical transmembrane segment spans residues 167–187 (IAVCVTTFSLAFCCFMVHGAI). At 188 to 194 (TRQPTHL) the chain is on the cytoplasmic side. A helical transmembrane segment spans residues 195-215 (LPFFFIQVFDLIICLIHILGF). The Extracellular portion of the chain corresponds to 216–241 (MSSTSDIRLMIHTKTGPIYIKSTGLA). The helical transmembrane segment at 242 to 262 (FIILSISCMMLAFKAYCLGMV) threads the bilayer. Residues 263–414 (WDCYKYLMLN…TSTPSNVHPC (152 aa)) are Cytoplasmic-facing. The disordered stretch occupies residues 306–328 (LTGNLDSANESNTRAHPDPVTYD).

Interacts (via N-terminal extracellular domain) with human C2a. In terms of processing, phosphorylated on tyrosine residues.

It localises to the cell membrane. In terms of biological role, cell surface receptor that binds to human complement C2a protein. This results in inhibition of the classical and lectin pathways of complement activation, probably due to interference with binding of C2a to C4b and interference with cleavage by C1 or MASP2 such that C3 convertase cannot be formed. This infers resistance to complement-mediated cell lysis, allowing parasite survival and infection. The polypeptide is Tetraspanning orphan receptor (Schistosoma japonicum (Blood fluke)).